Here is a 246-residue protein sequence, read N- to C-terminus: MRRIKCTIAYDGTNFAGYQIQQQKRTVQGELERALSIIHKGQFVRVYASGRTDATVHAYGQVIHFDTPLTIPDERWPKALNALLPDDVIVKEASEVPSSFHARFSVKKKEYRYRVWIGEKNVFLRHYVYHHPYDVSVPAMNEALRYLIGTHDFTSFCSAKTEVDDKVRTIYEAEVVQEGEELIFRLVGNGFLYNMVRIIVGTVLEVGRGERCAEEIKTILEQKNRSVAGKTAPGHGLYLWHVSYDN.

Aspartate 53 serves as the catalytic Nucleophile. Tyrosine 111 contacts substrate.

The protein belongs to the tRNA pseudouridine synthase TruA family. Homodimer.

It carries out the reaction uridine(38/39/40) in tRNA = pseudouridine(38/39/40) in tRNA. Functionally, formation of pseudouridine at positions 38, 39 and 40 in the anticodon stem and loop of transfer RNAs. This chain is tRNA pseudouridine synthase A, found in Anoxybacillus flavithermus (strain DSM 21510 / WK1).